The following is a 434-amino-acid chain: CC-adding tRNA nucleotidyltransferase (434 aa).

Residue 19-22 (GAVR) participates in CTP binding. The Mg(2+) site is built by Asp32 and Asp34. CTP-binding positions include 90-91 (RD), Asn95, 130-139 (DHLRSLRGVR), and Arg175.

This sequence belongs to the tRNA nucleotidyltransferase/poly(A) polymerase family. Mg(2+) is required as a cofactor.

It catalyses the reaction a tRNA precursor + 2 CTP = a tRNA with a 3' CC end + 2 diphosphate. In terms of biological role, tRNA nucleotidyltransferase involved in the synthesis of the tRNA CCA terminus. Adds the two cytidine residues to tRNA. This Thermus thermophilus (strain ATCC BAA-163 / DSM 7039 / HB27) protein is CC-adding tRNA nucleotidyltransferase.